The primary structure comprises 269 residues: Formamidopyrimidine-DNA glycosylase (269 aa).

Proline 2 (schiff-base intermediate with DNA) is an active-site residue. Glutamate 3 functions as the Proton donor in the catalytic mechanism. Lysine 57 functions as the Proton donor; for beta-elimination activity in the catalytic mechanism. The DNA site is built by histidine 90, arginine 109, and lysine 150. An FPG-type zinc finger spans residues 235–269 (QVYGRAGELCRRCGNVIEIAKHGQRSTFFCRHCQH). The active-site Proton donor; for delta-elimination activity is the arginine 259.

The protein belongs to the FPG family. In terms of assembly, monomer. Zn(2+) serves as cofactor.

The enzyme catalyses Hydrolysis of DNA containing ring-opened 7-methylguanine residues, releasing 2,6-diamino-4-hydroxy-5-(N-methyl)formamidopyrimidine.. The catalysed reaction is 2'-deoxyribonucleotide-(2'-deoxyribose 5'-phosphate)-2'-deoxyribonucleotide-DNA = a 3'-end 2'-deoxyribonucleotide-(2,3-dehydro-2,3-deoxyribose 5'-phosphate)-DNA + a 5'-end 5'-phospho-2'-deoxyribonucleoside-DNA + H(+). Involved in base excision repair of DNA damaged by oxidation or by mutagenic agents. Acts as a DNA glycosylase that recognizes and removes damaged bases. Has a preference for oxidized purines, such as 7,8-dihydro-8-oxoguanine (8-oxoG). Has AP (apurinic/apyrimidinic) lyase activity and introduces nicks in the DNA strand. Cleaves the DNA backbone by beta-delta elimination to generate a single-strand break at the site of the removed base with both 3'- and 5'-phosphates. The polypeptide is Formamidopyrimidine-DNA glycosylase (Yersinia enterocolitica serotype O:8 / biotype 1B (strain NCTC 13174 / 8081)).